The following is a 535-amino-acid chain: CTP synthase (535 aa).

Residues 1-267 (MTKYIFVTGG…DQIVCDHLKL (267 aa)) are amidoligase domain. Ser13 lines the CTP pocket. Residue Ser13 participates in UTP binding. 14-19 (SLGKGI) contacts ATP. Tyr54 is an L-glutamine binding site. Asp71 is an ATP binding site. Mg(2+) contacts are provided by Asp71 and Glu141. CTP-binding positions include 148 to 150 (DIE), 188 to 193 (KTKPTQ), and Lys224. UTP contacts are provided by residues 188-193 (KTKPTQ) and Lys224. 240–242 (RDA) is an ATP binding site. A Glutamine amidotransferase type-1 domain is found at 292–534 (KIALVGKYVE…VRASITNKES (243 aa)). Gly354 is a binding site for L-glutamine. Cys381 serves as the catalytic Nucleophile; for glutamine hydrolysis. L-glutamine contacts are provided by residues 382–385 (LGMQ), Glu405, and Arg462. Active-site residues include His507 and Glu509.

It belongs to the CTP synthase family. Homotetramer.

The enzyme catalyses UTP + L-glutamine + ATP + H2O = CTP + L-glutamate + ADP + phosphate + 2 H(+). The catalysed reaction is L-glutamine + H2O = L-glutamate + NH4(+). It catalyses the reaction UTP + NH4(+) + ATP = CTP + ADP + phosphate + 2 H(+). The protein operates within pyrimidine metabolism; CTP biosynthesis via de novo pathway; CTP from UDP: step 2/2. Allosterically activated by GTP, when glutamine is the substrate; GTP has no effect on the reaction when ammonia is the substrate. The allosteric effector GTP functions by stabilizing the protein conformation that binds the tetrahedral intermediate(s) formed during glutamine hydrolysis. Inhibited by the product CTP, via allosteric rather than competitive inhibition. Functionally, catalyzes the ATP-dependent amination of UTP to CTP with either L-glutamine or ammonia as the source of nitrogen. Regulates intracellular CTP levels through interactions with the four ribonucleotide triphosphates. The sequence is that of CTP synthase from Bacillus cereus (strain AH820).